Consider the following 236-residue polypeptide: Peptidase E (236 aa).

Residues Ser-122, Asp-137, and His-159 each act as charge relay system in the active site.

The protein belongs to the peptidase S51 family.

The protein resides in the cytoplasm. The enzyme catalyses Dipeptidase E catalyzes the hydrolysis of dipeptides Asp-|-Xaa. It does not act on peptides with N-terminal Glu, Asn or Gln, nor does it cleave isoaspartyl peptides.. Its function is as follows. Hydrolyzes dipeptides containing N-terminal aspartate residues. May play a role in allowing the cell to use peptide aspartate to spare carbon otherwise required for the synthesis of the aspartate family of amino acids. This chain is Peptidase E, found in Shewanella sp. (strain W3-18-1).